A 111-amino-acid chain; its full sequence is UPF0060 membrane protein Ajs_1473 (111 aa).

4 helical membrane passes run Ile8–Val28, Ser33–Leu53, Tyr65–Leu85, and Trp88–Ala108.

The protein belongs to the UPF0060 family.

Its subcellular location is the cell inner membrane. The sequence is that of UPF0060 membrane protein Ajs_1473 from Acidovorax sp. (strain JS42).